Here is an 88-residue protein sequence, read N- to C-terminus: Small ribosomal subunit protein bS20 (88 aa).

A disordered region spans residues M1–E36.

This sequence belongs to the bacterial ribosomal protein bS20 family.

Binds directly to 16S ribosomal RNA. The polypeptide is Small ribosomal subunit protein bS20 (Rhodopseudomonas palustris (strain HaA2)).